The chain runs to 85 residues: Large ribosomal subunit protein bL27 (85 aa).

Residues 1-22 (MAHKKGASSTRNGRDSNAQRLG) are disordered. Residues 7–19 (ASSTRNGRDSNAQ) are compositionally biased toward polar residues.

This sequence belongs to the bacterial ribosomal protein bL27 family.

The sequence is that of Large ribosomal subunit protein bL27 (rpmA) from Streptomyces griseus.